The sequence spans 672 residues: DNA ligase (672 aa).

NAD(+) contacts are provided by residues 30 to 34, 79 to 80, and Glu110; these read DAVYD and SL. Lys112 functions as the N6-AMP-lysine intermediate in the catalytic mechanism. Residues Arg133, Glu170, Lys287, and Lys311 each coordinate NAD(+). The Zn(2+) site is built by Cys405, Cys408, Cys423, and Cys429. One can recognise a BRCT domain in the interval 590–672; it reads ADELPLSGKT…IALLTEHGAI (83 aa).

Belongs to the NAD-dependent DNA ligase family. LigA subfamily. Mg(2+) is required as a cofactor. The cofactor is Mn(2+).

The enzyme catalyses NAD(+) + (deoxyribonucleotide)n-3'-hydroxyl + 5'-phospho-(deoxyribonucleotide)m = (deoxyribonucleotide)n+m + AMP + beta-nicotinamide D-nucleotide.. DNA ligase that catalyzes the formation of phosphodiester linkages between 5'-phosphoryl and 3'-hydroxyl groups in double-stranded DNA using NAD as a coenzyme and as the energy source for the reaction. It is essential for DNA replication and repair of damaged DNA. This is DNA ligase from Marinomonas sp. (strain MWYL1).